The following is a 126-amino-acid chain: Protein C10 (126 aa).

At alanine 2 the chain carries N-acetylalanine.

Belongs to the UPF0456 family. In terms of tissue distribution, ubiquitously expressed, with higher expression in lung.

Its subcellular location is the cytoplasm. In terms of biological role, in brain, may be required for corpus callosum development. The sequence is that of Protein C10 (Grcc10) from Mus musculus (Mouse).